The following is a 263-amino-acid chain: (2Z,6E)-farnesyl diphosphate synthase (263 aa).

Asp40 is an active-site residue. Asp40 contacts Mg(2+). Residues 41 to 44 (GNRR), Trp45, and 86 to 88 (STE) each bind substrate. Asn89 (proton acceptor) is an active-site residue. Substrate is bound by residues Arg92, Arg212, and 218–220 (RLS). Mg(2+) is bound at residue Glu231.

Belongs to the UPP synthase family. Z-FPP synthase subfamily. As to quaternary structure, homodimer. Mg(2+) serves as cofactor.

Its subcellular location is the cell membrane. The catalysed reaction is isopentenyl diphosphate + (2E)-geranyl diphosphate = (2Z,6E)-farnesyl diphosphate + diphosphate. Catalyzes the condensation of only one isopentenyl pyrophosphate (IPP) unit in the cis configuration to E-geranyl diphosphate (E-GPP) generating the 15 carbon product (2Z,6E)-farnesyl diphosphate (Z-FPP or EZ-FPP). Z-FPP is the precursor of decaprenyl diphosphate, which has a central role in the biosynthesis of the mycobacterial cell wall. This Mycolicibacterium smegmatis (strain ATCC 700084 / mc(2)155) (Mycobacterium smegmatis) protein is (2Z,6E)-farnesyl diphosphate synthase (uppS).